The primary structure comprises 2157 residues: Mediator of RNA polymerase II transcription subunit 12-like protein (2157 aa).

A disordered region spans residues 1–31 (MAAFGLLSYEQRPLKRPRLGPPDVYPQDPKQ). Threonine 462 is subject to Phosphothreonine. Positions 1437-1456 (ELEKGQHLGSSSKKERDRQK) are enriched in basic and acidic residues. Disordered regions lie at residues 1437 to 1461 (ELEK…KSMS), 1724 to 1807 (RSYY…SQMT), and 2040 to 2157 (IDAV…PSHF). Positions 1771 to 1780 (TKGRKRKTKS) are enriched in basic residues. Low complexity-rich tracts occupy residues 2063 to 2076 (PRQQ…RLLQ), 2083 to 2101 (QQPQ…QSQA), and 2116 to 2136 (RQGL…RQLQ). A compositionally biased stretch (polar residues) spans 2137-2148 (KQLSSNQPQQGV).

The protein belongs to the Mediator complex subunit 12 family. In terms of assembly, may be a component of the Mediator complex, which is known to be composed of MED1, MED4, MED6, MED7, MED8, MED9, MED10, MED11, MED12, MED13, MED13L, MED14, MED15, MED16, MED17, MED18, MED19, MED20, MED21, MED22, MED23, MED24, MED25, MED26, MED27, MED29, MED30, MED31, CCNC, CDK8 and CDC2L6/CDK11. The MED12, MED13, CCNC and CDK8 subunits form a distinct module termed the CDK8 module. Mediator containing the CDK8 module is less active than Mediator lacking this module in supporting transcriptional activation. Individual preparations of the Mediator complex lacking one or more distinct subunits have been variously termed ARC, CRSP, DRIP, PC2, SMCC and TRAP.

The protein localises to the nucleus. May be a component of the Mediator complex, a coactivator involved in the regulated transcription of nearly all RNA polymerase II-dependent genes. Mediator functions as a bridge to convey information from gene-specific regulatory proteins to the basal RNA polymerase II transcription machinery. Mediator is recruited to promoters by direct interactions with regulatory proteins and serves as a scaffold for the assembly of a functional preinitiation complex with RNA polymerase II and the general transcription factors. The polypeptide is Mediator of RNA polymerase II transcription subunit 12-like protein (Med12l) (Mus musculus (Mouse)).